The primary structure comprises 109 residues: Small ribosomal subunit protein bS6 (109 aa).

Belongs to the bacterial ribosomal protein bS6 family.

Binds together with bS18 to 16S ribosomal RNA. In Anaplasma marginale (strain St. Maries), this protein is Small ribosomal subunit protein bS6.